A 427-amino-acid chain; its full sequence is Acyl-CoA hydrolase 2 (427 aa).

Position 15 to 83 (15 to 83 (LLQKLPSSSL…FLLKQYDYFG (69 aa))) interacts with a nucleoside 3',5'-cyclic phosphate. Active-site charge relay system residues include aspartate 337, serine 359, and glutamine 409. Residues 425-427 (SKL) carry the Microbody targeting signal motif.

This sequence belongs to the C/M/P thioester hydrolase family. Homotetramer. As to expression, mostly expressed in leaves and flowers, and, to a lower extent, in seedlings and siliques.

The protein localises to the peroxisome matrix. The catalysed reaction is a fatty acyl-CoA + H2O = a fatty acid + CoA + H(+). It carries out the reaction dodecanoyl-CoA + H2O = dodecanoate + CoA + H(+). The enzyme catalyses tetradecanoyl-CoA + H2O = tetradecanoate + CoA + H(+). It catalyses the reaction octadecanoyl-CoA + H2O = octadecanoate + CoA + H(+). The catalysed reaction is (9Z)-hexadecenoyl-CoA + H2O = (9Z)-hexadecenoate + CoA + H(+). It carries out the reaction (5Z,8Z,11Z,14Z)-eicosatetraenoyl-CoA + H2O = (5Z,8Z,11Z,14Z)-eicosatetraenoate + CoA + H(+). The enzyme catalyses hexadecanoyl-CoA + H2O = hexadecanoate + CoA + H(+). It catalyses the reaction (9Z)-octadecenoyl-CoA + H2O = (9Z)-octadecenoate + CoA + H(+). The catalysed reaction is (9Z,12Z)-octadecadienoyl-CoA + H2O = (9Z,12Z)-octadecadienoate + CoA + H(+). It participates in lipid metabolism; fatty acid metabolism. With respect to regulation, insensitive to feedback inhibition by free coenzyme A (CoASH). In terms of biological role, catalyzes the hydrolysis of acyl-CoAs into free fatty acids and coenzyme A (CoASH), regulating their respective intracellular levels. Active with both medium chain and long chain acyl-CoAs (e.g. 12:0-CoA, 14:0-CoA, 16:0-CoA, 18:0-CoA, 16:1-CoA, 18:1-CoA, 18:2-CoA and 20:4-CoA) as substrates, palmitoleoyl-CoA (16:1-CoA) being the favorite substrate. This Arabidopsis thaliana (Mouse-ear cress) protein is Acyl-CoA hydrolase 2.